The sequence spans 650 residues: Acetyl-coenzyme A synthetase (650 aa).

CoA-binding positions include 191–194 (RGGR), Thr-311, and Asn-335. Residues 387–389 (GEP), 411–416 (DTWWQT), Asp-500, and Arg-515 contribute to the ATP site. Ser-523 is a CoA binding site. Arg-526 lines the ATP pocket. Mg(2+) contacts are provided by Val-537, His-539, and Val-542. Arg-584 contacts CoA. Lys-609 is modified (N6-acetyllysine).

The protein belongs to the ATP-dependent AMP-binding enzyme family. The cofactor is Mg(2+). Post-translationally, acetylated. Deacetylation by the SIR2-homolog deacetylase activates the enzyme.

The enzyme catalyses acetate + ATP + CoA = acetyl-CoA + AMP + diphosphate. Functionally, catalyzes the conversion of acetate into acetyl-CoA (AcCoA), an essential intermediate at the junction of anabolic and catabolic pathways. AcsA undergoes a two-step reaction. In the first half reaction, AcsA combines acetate with ATP to form acetyl-adenylate (AcAMP) intermediate. In the second half reaction, it can then transfer the acetyl group from AcAMP to the sulfhydryl group of CoA, forming the product AcCoA. The chain is Acetyl-coenzyme A synthetase from Shewanella amazonensis (strain ATCC BAA-1098 / SB2B).